A 314-amino-acid chain; its full sequence is Olfactory receptor 5P68 (314 aa).

At 1-28 the chain is on the extracellular side; the sequence is MAFLHNGNHTAVTEFILLGLTDDPVFRV. A glycan (N-linked (GlcNAc...) asparagine) is linked at N8. The chain crosses the membrane as a helical span at residues 29–49; it reads ILFTIILCIYLVTVSGNLSTI. Residues 50–57 lie on the Cytoplasmic side of the membrane; sequence LLIRVSSQ. Residues 58–78 traverse the membrane as a helical segment; that stretch reads LHHPMYFFLSHLASVDIGYSS. Over 79 to 102 the chain is Extracellular; the sequence is SVTPNMLANFLVEKNTISYLGCTI. C100 and C192 form a disulfide bridge. Residues 103-123 form a helical membrane-spanning segment; it reads QLSLAAFCGTVECFLLATMAY. Residues 124–136 are Cytoplasmic-facing; the sequence is DRFMAICSPLLYS. The helical transmembrane segment at 137–157 threads the bilayer; it reads TKMSTQVCIQLIVGSYIGGFL. Over 158–199 the chain is Extracellular; sequence NASSFTLFFLSFLFCGPNRINHFYCDFAPLVALSCSDVSVSE. Residues 200–220 traverse the membrane as a helical segment; it reads VVTSFFSGSVTMITMLVIAIS. Residues 221–240 are Cytoplasmic-facing; it reads YTYILITILKMRSTEGRHKA. The helical transmembrane segment at 241–261 threads the bilayer; the sequence is FSTCTSHLTAVTLFYGTITFI. Topologically, residues 262-274 are extracellular; it reads YVMPKSSFSTDQN. A helical membrane pass occupies residues 275–295; the sequence is KVVSVFYMVVIPMLNPLIYSL. Residues 296-314 lie on the Cytoplasmic side of the membrane; the sequence is RNNEIKDALKRHLGKKIFS.

Belongs to the G-protein coupled receptor 1 family.

It is found in the cell membrane. Potential odorant receptor. This chain is Olfactory receptor 5P68, found in Mus musculus (Mouse).